The chain runs to 396 residues: Ornithine aminotransferase (396 aa).

Lys255 bears the N6-(pyridoxal phosphate)lysine mark.

This sequence belongs to the class-III pyridoxal-phosphate-dependent aminotransferase family. OAT subfamily. Requires pyridoxal 5'-phosphate as cofactor.

Its subcellular location is the cytoplasm. It carries out the reaction a 2-oxocarboxylate + L-ornithine = L-glutamate 5-semialdehyde + an L-alpha-amino acid. Its pathway is amino-acid biosynthesis; L-proline biosynthesis; L-glutamate 5-semialdehyde from L-ornithine: step 1/1. Catalyzes the interconversion of ornithine to glutamate semialdehyde. The protein is Ornithine aminotransferase of Staphylococcus epidermidis (strain ATCC 12228 / FDA PCI 1200).